We begin with the raw amino-acid sequence, 260 residues long: Alpha-acetolactate decarboxylase (260 aa).

The protein belongs to the alpha-acetolactate decarboxylase family.

The enzyme catalyses (2S)-2-acetolactate + H(+) = (R)-acetoin + CO2. It participates in polyol metabolism; (R,R)-butane-2,3-diol biosynthesis; (R,R)-butane-2,3-diol from pyruvate: step 2/3. Its function is as follows. Converts acetolactate into acetoin. This Methylococcus capsulatus (strain ATCC 33009 / NCIMB 11132 / Bath) protein is Alpha-acetolactate decarboxylase (budA).